Reading from the N-terminus, the 60-residue chain is Large ribosomal subunit protein bL32 (60 aa).

It belongs to the bacterial ribosomal protein bL32 family.

This chain is Large ribosomal subunit protein bL32, found in Thermosipho melanesiensis (strain DSM 12029 / CIP 104789 / BI429).